The chain runs to 465 residues: Gamma-aminobutyric acid receptor subunit gamma-1 (465 aa).

A signal peptide spans 1 to 20 (MGSGKVFLFSPSLLWSQTRG). The Extracellular segment spans residues 21–273 (VRLIFLLLTL…FDLSRRMGYF (253 aa)). Residues N50 and N127 are each glycosylated (N-linked (GlcNAc...) asparagine). C188 and C202 are oxidised to a cystine. N245 carries N-linked (GlcNAc...) asparagine glycosylation. The chain crosses the membrane as a helical span at residues 274–294 (TIQTYIPCILTVVLSWVSFWI). The Cytoplasmic segment spans residues 295–300 (NKDAVP). A helical transmembrane segment spans residues 301-320 (ARTSLGITTVLTMTTLSTIA). The Extracellular portion of the chain corresponds to 321–328 (RKSLPKVS). Residues 329-349 (YVTAMDLFVSVCFIFVFAALM) traverse the membrane as a helical segment. The Cytoplasmic segment spans residues 350–444 (EYGTLHYFTS…RIAKIDSYSR (95 aa)). Residues 445–465 (IFFPTAFALFNLVYWVGYLYL) traverse the membrane as a helical segment.

This sequence belongs to the ligand-gated ion channel (TC 1.A.9) family. Gamma-aminobutyric acid receptor (TC 1.A.9.5) subfamily. GABRG1 sub-subfamily. In terms of assembly, heteropentamer, formed by a combination of alpha (GABRA1-6), beta (GABRB1-3), gamma (GABRG1-3), delta (GABRD), epsilon (GABRE), rho (GABRR1-3), pi (GABRP) and theta (GABRQ) chains, each subunit exhibiting distinct physiological and pharmacological properties. May be palmitoylated. Expressed in brain.

Its subcellular location is the postsynaptic cell membrane. The protein resides in the cell membrane. The enzyme catalyses chloride(in) = chloride(out). Functionally, gamma subunit of the heteropentameric ligand-gated chloride channel gated by gamma-aminobutyric acid (GABA), a major inhibitory neurotransmitter in the brain. GABA-gated chloride channels, also named GABA(A) receptors (GABAAR), consist of five subunits arranged around a central pore and contain GABA active binding site(s) located at the alpha and beta subunit interface(s). When activated by GABA, GABAARs selectively allow the flow of chloride anions across the cell membrane down their electrochemical gradient. Chloride influx into the postsynaptic neuron following GABAAR opening decreases the neuron ability to generate a new action potential, thereby reducing nerve transmission. This chain is Gamma-aminobutyric acid receptor subunit gamma-1, found in Rattus norvegicus (Rat).